The chain runs to 292 residues: Ribosomal RNA small subunit methyltransferase A (292 aa).

Asparagine 28, leucine 30, glycine 55, glutamate 77, aspartate 103, and asparagine 123 together coordinate S-adenosyl-L-methionine.

The protein belongs to the class I-like SAM-binding methyltransferase superfamily. rRNA adenine N(6)-methyltransferase family. RsmA subfamily.

Its subcellular location is the cytoplasm. It carries out the reaction adenosine(1518)/adenosine(1519) in 16S rRNA + 4 S-adenosyl-L-methionine = N(6)-dimethyladenosine(1518)/N(6)-dimethyladenosine(1519) in 16S rRNA + 4 S-adenosyl-L-homocysteine + 4 H(+). Its function is as follows. Specifically dimethylates two adjacent adenosines (A1518 and A1519) in the loop of a conserved hairpin near the 3'-end of 16S rRNA in the 30S particle. May play a critical role in biogenesis of 30S subunits. The protein is Ribosomal RNA small subunit methyltransferase A of Methylobacterium radiotolerans (strain ATCC 27329 / DSM 1819 / JCM 2831 / NBRC 15690 / NCIMB 10815 / 0-1).